Consider the following 450-residue polypeptide: Glucose-6-phosphate isomerase (450 aa).

Glutamate 291 acts as the Proton donor in catalysis. Active-site residues include histidine 312 and lysine 426.

Belongs to the GPI family.

Its subcellular location is the cytoplasm. The enzyme catalyses alpha-D-glucose 6-phosphate = beta-D-fructose 6-phosphate. It participates in carbohydrate biosynthesis; gluconeogenesis. It functions in the pathway carbohydrate degradation; glycolysis; D-glyceraldehyde 3-phosphate and glycerone phosphate from D-glucose: step 2/4. In terms of biological role, catalyzes the reversible isomerization of glucose-6-phosphate to fructose-6-phosphate. The chain is Glucose-6-phosphate isomerase from Clostridium botulinum (strain Hall / ATCC 3502 / NCTC 13319 / Type A).